Consider the following 405-residue polypeptide: Type II secretion system protein F (405 aa).

The Cytoplasmic portion of the chain corresponds to 1 to 168; the sequence is MAAFEYLALD…QRQQSRQKIQ (168 aa). 3 residues coordinate Ca(2+): Thr-97, Glu-151, and Asp-155. A helical membrane pass occupies residues 169 to 189; sequence LALLYPVILMVASLAIVGFLL. Topologically, residues 190–219 are periplasmic; it reads GYVVPDVVRVFIDSGQTLPLLTRVLIGVSD. A helical transmembrane segment spans residues 220–239; that stretch reads WVKAWGALAFVAAIGGVIGF. The Cytoplasmic portion of the chain corresponds to 240–376; that stretch reads RYALRKDAFR…IGLMVGLFEP (137 aa). Residues 377–397 traverse the membrane as a helical segment; it reads FMLIFMGAVVLVIVLAILLPI. Residues 398–405 lie on the Periplasmic side of the membrane; it reads LSLNQLVG.

Belongs to the GSP F family. Type II secretion system is composed of four main components: the outer membrane complex, the inner membrane complex, the cytoplasmic secretion ATPase and the periplasm-spanning pseudopilus. Homodimer. Interacts with XcpR/GspE and XcpY/GspL components.

It localises to the cell inner membrane. Its function is as follows. Component of the type II secretion system inner membrane complex required for the energy-dependent secretion of extracellular factors such as proteases and toxins from the periplasm. In Pseudomonas aeruginosa (strain ATCC 15692 / DSM 22644 / CIP 104116 / JCM 14847 / LMG 12228 / 1C / PRS 101 / PAO1), this protein is Type II secretion system protein F (xcpS).